The primary structure comprises 367 residues: Chorismate synthase (367 aa).

2 residues coordinate NADP(+): R48 and R54. FMN is bound by residues 125–127 (RSS), 238–239 (NA), G278, 293–297 (KPTSS), and R319.

It belongs to the chorismate synthase family. As to quaternary structure, homotetramer. FMNH2 is required as a cofactor.

It carries out the reaction 5-O-(1-carboxyvinyl)-3-phosphoshikimate = chorismate + phosphate. The protein operates within metabolic intermediate biosynthesis; chorismate biosynthesis; chorismate from D-erythrose 4-phosphate and phosphoenolpyruvate: step 7/7. Functionally, catalyzes the anti-1,4-elimination of the C-3 phosphate and the C-6 proR hydrogen from 5-enolpyruvylshikimate-3-phosphate (EPSP) to yield chorismate, which is the branch point compound that serves as the starting substrate for the three terminal pathways of aromatic amino acid biosynthesis. This reaction introduces a second double bond into the aromatic ring system. The chain is Chorismate synthase from Stenotrophomonas maltophilia (strain R551-3).